Here is a 243-residue protein sequence, read N- to C-terminus: METKFSDVINGLKEWYDEYLKLYPEYKNFLTLLEIVSEEGPDKAIDNEEFNKLVINAVTKQPKIYKIYLTSDDGIYPLPTWNSDVYVEHFEQYYIDRIVFSRKYRHNRDFLIGLTEYYGSLVGLTKIAIDAVVSDYVREQLGIYHMSLDKALQLNLSIPINTLLDRIRNNYKVPIIKEMDEENPVVPEERPKSNNEPTYRQMINEYQEKAPVEIKLTPEEIEEEITRRILDETIEDEYDEIES.

This is an uncharacterized protein from Acidianus bottle-shaped virus (isolate Italy/Pozzuoli) (ABV).